The sequence spans 209 residues: ATP phosphoribosyltransferase (209 aa).

The protein belongs to the ATP phosphoribosyltransferase family. Short subfamily. As to quaternary structure, heteromultimer composed of HisG and HisZ subunits.

Its subcellular location is the cytoplasm. It catalyses the reaction 1-(5-phospho-beta-D-ribosyl)-ATP + diphosphate = 5-phospho-alpha-D-ribose 1-diphosphate + ATP. Its pathway is amino-acid biosynthesis; L-histidine biosynthesis; L-histidine from 5-phospho-alpha-D-ribose 1-diphosphate: step 1/9. In terms of biological role, catalyzes the condensation of ATP and 5-phosphoribose 1-diphosphate to form N'-(5'-phosphoribosyl)-ATP (PR-ATP). Has a crucial role in the pathway because the rate of histidine biosynthesis seems to be controlled primarily by regulation of HisG enzymatic activity. The sequence is that of ATP phosphoribosyltransferase from Sulfurimonas denitrificans (strain ATCC 33889 / DSM 1251) (Thiomicrospira denitrificans (strain ATCC 33889 / DSM 1251)).